We begin with the raw amino-acid sequence, 206 residues long: MELKLLQDNGQIGAGVAASAEVFGRDYNEALVHQIVVAYQANARSGNRKQKDREEVKHTTKKPWRQKGTGRARAGMSSSPLWRGGGRIFPNSPEENFSQKVNKKMFRAGMRSIYSQLAREGRINVVDGFAVDAPKTKLLADKFKAMGLDSVLIITDNLDENLYLASRNLPNVAVVEPRHADPLSLVHYKKVLVTKAAVAQIEELLK.

The tract at residues 43 to 78 (ARSGNRKQKDREEVKHTTKKPWRQKGTGRARAGMSS) is disordered. Basic and acidic residues predominate over residues 49–58 (KQKDREEVKH). A compositionally biased stretch (basic residues) spans 59 to 70 (TTKKPWRQKGTG).

This sequence belongs to the universal ribosomal protein uL4 family. As to quaternary structure, part of the 50S ribosomal subunit.

One of the primary rRNA binding proteins, this protein initially binds near the 5'-end of the 23S rRNA. It is important during the early stages of 50S assembly. It makes multiple contacts with different domains of the 23S rRNA in the assembled 50S subunit and ribosome. Its function is as follows. Forms part of the polypeptide exit tunnel. The polypeptide is Large ribosomal subunit protein uL4 (Cupriavidus metallidurans (strain ATCC 43123 / DSM 2839 / NBRC 102507 / CH34) (Ralstonia metallidurans)).